Reading from the N-terminus, the 411-residue chain is CinA-like protein (411 aa).

It belongs to the CinA family.

The chain is CinA-like protein from Dictyoglomus thermophilum (strain ATCC 35947 / DSM 3960 / H-6-12).